We begin with the raw amino-acid sequence, 63 residues long: Beta-insect depressant toxin Im-3 (63 aa).

In terms of domain architecture, LCN-type CS-alpha/beta spans 1-63 (KEGYGVGKDG…KVWESSTNTC (63 aa)). 4 cysteine pairs are disulfide-bonded: Cys-11–Cys-63, Cys-15–Cys-37, Cys-22–Cys-44, and Cys-26–Cys-46.

This sequence belongs to the long (4 C-C) scorpion toxin superfamily. Sodium channel inhibitor family. Beta subfamily. Expressed by the venom gland.

The protein localises to the secreted. Functionally, beta toxins bind voltage-independently at site-4 of sodium channels (Nav) and shift the voltage of activation toward more negative potentials thereby affecting sodium channel activation and promoting spontaneous and repetitive firing. Induces paralysis in cricket A.domestica but does not induce death. In Isometrus maculatus (Lesser brown scorpion), this protein is Beta-insect depressant toxin Im-3.